We begin with the raw amino-acid sequence, 183 residues long: Ribosome-recycling factor (183 aa).

The protein belongs to the RRF family.

Its subcellular location is the cytoplasm. Responsible for the release of ribosomes from messenger RNA at the termination of protein biosynthesis. May increase the efficiency of translation by recycling ribosomes from one round of translation to another. The chain is Ribosome-recycling factor from Bifidobacterium longum (strain DJO10A).